The following is a 313-amino-acid chain: Putative zinc finger protein 077L (313 aa).

The C3H1-type zinc-finger motif lies at 174 to 199 (CFSITKGIECPHYSCTYIHNYSQIEH). The disordered stretch occupies residues 294–313 (SDDSDSENNDEDDDWKIDLF). A compositionally biased stretch (acidic residues) spans 296–313 (DSDSENNDEDDDWKIDLF).

Belongs to the IIV-6 077L family.

This Invertebrate iridescent virus 6 (IIV-6) protein is Putative zinc finger protein 077L.